A 320-amino-acid polypeptide reads, in one-letter code: Lipoyl synthase (320 aa).

Positions 67, 72, 78, 93, 97, 100, and 307 each coordinate [4Fe-4S] cluster. The 218-residue stretch at 79–296 folds into the Radical SAM core domain; sequence FNHGTATFMI…RDKANEMGFE (218 aa).

It belongs to the radical SAM superfamily. Lipoyl synthase family. The cofactor is [4Fe-4S] cluster.

Its subcellular location is the cytoplasm. It carries out the reaction [[Fe-S] cluster scaffold protein carrying a second [4Fe-4S](2+) cluster] + N(6)-octanoyl-L-lysyl-[protein] + 2 oxidized [2Fe-2S]-[ferredoxin] + 2 S-adenosyl-L-methionine + 4 H(+) = [[Fe-S] cluster scaffold protein] + N(6)-[(R)-dihydrolipoyl]-L-lysyl-[protein] + 4 Fe(3+) + 2 hydrogen sulfide + 2 5'-deoxyadenosine + 2 L-methionine + 2 reduced [2Fe-2S]-[ferredoxin]. It participates in protein modification; protein lipoylation via endogenous pathway; protein N(6)-(lipoyl)lysine from octanoyl-[acyl-carrier-protein]: step 2/2. Functionally, catalyzes the radical-mediated insertion of two sulfur atoms into the C-6 and C-8 positions of the octanoyl moiety bound to the lipoyl domains of lipoate-dependent enzymes, thereby converting the octanoylated domains into lipoylated derivatives. The polypeptide is Lipoyl synthase (Haemophilus influenzae (strain PittGG)).